The chain runs to 338 residues: Protein FosB (338 aa).

Disordered stretches follow at residues 1–54, 79–191, 222–276, and 316–338; these read MFQA…PGSF, MAQS…DQLE, CKIP…PPNL, and GAQR…LLAL. Composition is skewed to polar residues over residues 13 to 31 and 79 to 88; these read SRCS…SVDS and MAQSQGQPLA. Position 27 is a phosphoserine (serine 27). The span at 113 to 124 shows a compositional bias: gly residues; it reads SSGGASGSGGPS. The span at 125–137 shows a compositional bias: low complexity; that stretch reads TSGTTSGPGPARP. The 64-residue stretch at 155–218 folds into the bZIP domain; that stretch reads EEKRRVRRER…ERLEFVLVAH (64 aa). Positions 157-182 are basic motif; it reads KRRVRRERNKLAAAKCRNRRRELTDR. The tract at residues 183-211 is leucine-zipper; sequence LQAETDQLEEEKAELESEIAELQKEKERL. Residues 256–265 show a composition bias toward pro residues; sequence LPPPPPPPLP. Composition is skewed to polar residues over residues 266–276 and 318–338; these read FQTSQDAPPNL and QRTS…LLAL.

Belongs to the bZIP family. Fos subfamily. Heterodimer; binds to DNA as heterodimer. Component of an AP-1 transcription factor complex; composed of FOS-JUN heterodimers. As part of the AP-1 transcription factor complex, forms heterodimers with JUN, JUNB or JUND, thereby binding to the AP-1 consensus sequence and stimulating transcription. Interacts with the BAF multiprotein chromatin-remodeling complex subunits SMARCB1 and SMARCD1. Interacts with ARID1A and JUN. As to quaternary structure, homodimer under oxidizing conditions and monomer under reducing conditions (in vitro). Heterodimer; binds to DNA as heterodimer. Forms heterodimers with JUNB, JUN or JUND; thereby binding to the AP-1 consensus sequence but does not stimulate transcription. Forms heterodimers with JUND under oxidizing conditions. Post-translationally, phosphorylated. Phosphorylated at Ser-27 by CSNK2A1; phosphorylation increases protein stability and transactivation potential. As to expression, expressed in the nucleus accumbens of the striatum (at protein level).

The protein localises to the nucleus. Heterodimerizes with proteins of the JUN family to form an AP-1 transcription factor complex, thereby enhancing their DNA binding activity to gene promoters containing an AP-1 consensus sequence 5'-TGA[GC]TCA-3' and enhancing their transcriptional activity. As part of the AP-1 complex, facilitates enhancer selection together with cell-type-specific transcription factors by collaboratively binding to nucleosomal enhancers and recruiting the SWI/SNF (BAF) chromatin remodeling complex to establish accessible chromatin. Together with JUN, plays a role in activation-induced cell death of T cells by binding to the AP-1 promoter site of FASLG/CD95L, and inducing its transcription in response to activation of the TCR/CD3 signaling pathway. Exhibits transactivation activity in vitro. Involved in the display of nurturing behavior towards newborns. May play a role in neurogenesis in the hippocampus and in learning and memory-related tasks by regulating the expression of various genes involved in neurogenesis, depression and epilepsy. Implicated in behavioral responses related to morphine reward and spatial memory. Functionally, exhibits lower transactivation activity than isoform 1 in vitro. The heterodimer with JUN does not display any transcriptional activity, and may thereby act as an transcriptional inhibitor. May be involved in the regulation of neurogenesis in the hippocampus. May play a role in synaptic modifications in nucleus accumbens medium spiny neurons and thereby play a role in adaptive and pathological reward-dependent learning, including maladaptive responses involved in drug addiction. Seems to be more stably expressed with a half-life of ~9.5 hours in cell culture as compared to 1.5 hours half-life of isoform 1. The protein is Protein FosB (FOSB) of Homo sapiens (Human).